A 401-amino-acid polypeptide reads, in one-letter code: Argininosuccinate synthase (401 aa).

8–16 (AYSGGLDTS) serves as a coordination point for ATP. Position 85 (Tyr-85) interacts with L-citrulline. Residue Gly-115 participates in ATP binding. L-aspartate-binding residues include Thr-117, Asn-121, and Asp-122. Asn-121 provides a ligand contact to L-citrulline. Residues Arg-125, Ser-173, Glu-258, and Tyr-270 each coordinate L-citrulline.

The protein belongs to the argininosuccinate synthase family. Type 1 subfamily. As to quaternary structure, homotetramer.

The protein resides in the cytoplasm. The catalysed reaction is L-citrulline + L-aspartate + ATP = 2-(N(omega)-L-arginino)succinate + AMP + diphosphate + H(+). It functions in the pathway amino-acid biosynthesis; L-arginine biosynthesis; L-arginine from L-ornithine and carbamoyl phosphate: step 2/3. In Staphylococcus aureus (strain bovine RF122 / ET3-1), this protein is Argininosuccinate synthase.